Reading from the N-terminus, the 232-residue chain is MVAKRIQKIREGVDPTKLYALTQAIGMVKERAIAKFDETIEVSMNLGVDPRHADQMVRGVVNLPNGTGRSVRVAVFARGAKADEAKAAGADIVGAEELVEIVQGGKIDFDRCIATPDMMPLVGRLGKVLGPRGMMPNPKVGTVTMDVKGAVEASKGGAVEFRVEKAGIVHAGIGKASFDAKALEENIRAFADAVIKAKPAGAKGNYVKRVAISSTMGPGVKIELASVTAPNA.

The protein belongs to the universal ribosomal protein uL1 family. Part of the 50S ribosomal subunit.

In terms of biological role, binds directly to 23S rRNA. The L1 stalk is quite mobile in the ribosome, and is involved in E site tRNA release. Its function is as follows. Protein L1 is also a translational repressor protein, it controls the translation of the L11 operon by binding to its mRNA. The sequence is that of Large ribosomal subunit protein uL1 from Rhizobium rhizogenes (strain K84 / ATCC BAA-868) (Agrobacterium radiobacter).